The primary structure comprises 990 residues: Membrane alanyl aminopeptidase (990 aa).

The first 15 residues, 1 to 15 (FTIFLGVALLQGVLT), serve as a signal peptide directing secretion. The propeptide at 16–35 (LSPIPVPEEEWAEFSRMLRD) is activation peptide. The N-linked (GlcNAc...) asparagine glycan is linked to asparagine 295. 321 to 325 (GAMEN) is a binding site for substrate. Histidine 357 contacts Zn(2+). Glutamate 358 serves as the catalytic Proton acceptor. Zn(2+)-binding residues include histidine 361 and glutamate 380. Residues asparagine 609, asparagine 623, and asparagine 752 are each glycosylated (N-linked (GlcNAc...) asparagine). A lipid anchor (GPI-anchor amidated glycine) is attached at glycine 968. Residues 969-990 (SGNIAALSVVSLLVTLAINMVA) constitute a propeptide, removed in mature form.

Belongs to the peptidase M1 family. Requires Zn(2+) as cofactor. In terms of tissue distribution, midgut brush-border membrane.

It localises to the cell membrane. In terms of biological role, binds to the B.thuringiensis toxin, CryIA(C). This chain is Membrane alanyl aminopeptidase, found in Manduca sexta (Tobacco hawkmoth).